A 146-amino-acid chain; its full sequence is Hut operon positive regulatory protein (146 aa).

Belongs to the HutP family. As to quaternary structure, homohexamer.

Its function is as follows. Antiterminator that binds to cis-acting regulatory sequences on the mRNA in the presence of histidine, thereby suppressing transcription termination and activating the hut operon for histidine utilization. This is Hut operon positive regulatory protein from Bacillus cereus (strain ZK / E33L).